The sequence spans 447 residues: Hydroxymethylglutaryl-CoA synthase (447 aa).

Catalysis depends on Glu-86, which acts as the Proton donor/acceptor. Catalysis depends on Cys-118, which acts as the Acyl-thioester intermediate. Residues Cys-118, Asn-156, Thr-160, Ser-210, His-250, Lys-259, Asn-327, and Ser-361 each coordinate (3S)-3-hydroxy-3-methylglutaryl-CoA. Residue His-250 is the Proton donor/acceptor of the active site. Phosphothreonine is present on Thr-398.

This sequence belongs to the thiolase-like superfamily. HMG-CoA synthase family.

The catalysed reaction is acetoacetyl-CoA + acetyl-CoA + H2O = (3S)-3-hydroxy-3-methylglutaryl-CoA + CoA + H(+). Its pathway is metabolic intermediate biosynthesis; (R)-mevalonate biosynthesis; (R)-mevalonate from acetyl-CoA: step 2/3. Its function is as follows. Hydroxymethylglutaryl-CoA synthase; part of the first module of ergosterol biosynthesis pathway that includes the early steps of the pathway, conserved across all eukaryotes, and which results in the formation of mevalonate from acetyl-coenzyme A (acetyl-CoA). Hcs1 condenses acetyl-CoA with acetoacetyl-CoA to form hydroxymethylglutaryl-CoA (HMG-CoA). The first module starts with the action of the cytosolic acetyl-CoA acetyltransferase eg10 that catalyzes the formation of acetoacetyl-CoA. The hydroxymethylglutaryl-CoA synthases erg13 then condenses acetyl-CoA with acetoacetyl-CoA to form HMG-CoA. The rate-limiting step of the early module is the reduction to mevalonate by the 3-hydroxy-3-methylglutaryl-coenzyme A (HMG-CoA) reductases hcs1. This is Hydroxymethylglutaryl-CoA synthase from Schizosaccharomyces pombe (strain 972 / ATCC 24843) (Fission yeast).